A 701-amino-acid polypeptide reads, in one-letter code: Ribosomal RNA large subunit methyltransferase K/L (701 aa).

The THUMP domain occupies 43–154 (LLYQSLMWSR…KETAHISLDL (112 aa)).

The protein belongs to the methyltransferase superfamily. RlmKL family.

The protein resides in the cytoplasm. The catalysed reaction is guanosine(2445) in 23S rRNA + S-adenosyl-L-methionine = N(2)-methylguanosine(2445) in 23S rRNA + S-adenosyl-L-homocysteine + H(+). It carries out the reaction guanosine(2069) in 23S rRNA + S-adenosyl-L-methionine = N(2)-methylguanosine(2069) in 23S rRNA + S-adenosyl-L-homocysteine + H(+). In terms of biological role, specifically methylates the guanine in position 2445 (m2G2445) and the guanine in position 2069 (m7G2069) of 23S rRNA. The chain is Ribosomal RNA large subunit methyltransferase K/L from Klebsiella pneumoniae (strain 342).